Here is a 139-residue protein sequence, read N- to C-terminus: uncharacterized protein (139 aa).

This is an uncharacterized protein from Burkholderia cepacia (Pseudomonas cepacia).